Reading from the N-terminus, the 288-residue chain is 4-hydroxy-3-methylbut-2-enyl diphosphate reductase (288 aa).

Cysteine 12 contributes to the [4Fe-4S] cluster binding site. (2E)-4-hydroxy-3-methylbut-2-enyl diphosphate is bound by residues histidine 42 and histidine 77. 2 residues coordinate dimethylallyl diphosphate: histidine 42 and histidine 77. Positions 42 and 77 each coordinate isopentenyl diphosphate. Residue cysteine 99 participates in [4Fe-4S] cluster binding. Residue histidine 127 participates in (2E)-4-hydroxy-3-methylbut-2-enyl diphosphate binding. Histidine 127 lines the dimethylallyl diphosphate pocket. Residue histidine 127 coordinates isopentenyl diphosphate. Glutamate 129 serves as the catalytic Proton donor. Threonine 165 provides a ligand contact to (2E)-4-hydroxy-3-methylbut-2-enyl diphosphate. Residue cysteine 193 coordinates [4Fe-4S] cluster. Residues serine 221, serine 222, asparagine 223, and serine 265 each contribute to the (2E)-4-hydroxy-3-methylbut-2-enyl diphosphate site. 4 residues coordinate dimethylallyl diphosphate: serine 221, serine 222, asparagine 223, and serine 265. Isopentenyl diphosphate contacts are provided by serine 221, serine 222, asparagine 223, and serine 265.

This sequence belongs to the IspH family. Requires [4Fe-4S] cluster as cofactor.

The enzyme catalyses isopentenyl diphosphate + 2 oxidized [2Fe-2S]-[ferredoxin] + H2O = (2E)-4-hydroxy-3-methylbut-2-enyl diphosphate + 2 reduced [2Fe-2S]-[ferredoxin] + 2 H(+). It catalyses the reaction dimethylallyl diphosphate + 2 oxidized [2Fe-2S]-[ferredoxin] + H2O = (2E)-4-hydroxy-3-methylbut-2-enyl diphosphate + 2 reduced [2Fe-2S]-[ferredoxin] + 2 H(+). The protein operates within isoprenoid biosynthesis; dimethylallyl diphosphate biosynthesis; dimethylallyl diphosphate from (2E)-4-hydroxy-3-methylbutenyl diphosphate: step 1/1. It functions in the pathway isoprenoid biosynthesis; isopentenyl diphosphate biosynthesis via DXP pathway; isopentenyl diphosphate from 1-deoxy-D-xylulose 5-phosphate: step 6/6. Catalyzes the conversion of 1-hydroxy-2-methyl-2-(E)-butenyl 4-diphosphate (HMBPP) into a mixture of isopentenyl diphosphate (IPP) and dimethylallyl diphosphate (DMAPP). Acts in the terminal step of the DOXP/MEP pathway for isoprenoid precursor biosynthesis. The polypeptide is 4-hydroxy-3-methylbut-2-enyl diphosphate reductase (Thermoanaerobacter pseudethanolicus (strain ATCC 33223 / 39E) (Clostridium thermohydrosulfuricum)).